The following is a 454-amino-acid chain: L-serine dehydratase 1 (454 aa).

This sequence belongs to the iron-sulfur dependent L-serine dehydratase family. The cofactor is [4Fe-4S] cluster. Post-translationally, activated by post-translational modification by a system involving at least three gene products. Activation is mimicked in vitro by iron and dithiothreitol. There is considerable evidence for a free-radical activation mechanism.

The catalysed reaction is L-serine = pyruvate + NH4(+). The protein operates within carbohydrate biosynthesis; gluconeogenesis. Functionally, also deaminates threonine, particularly when it is present in high concentration. This chain is L-serine dehydratase 1 (sdaA), found in Escherichia coli (strain K12).